Reading from the N-terminus, the 442-residue chain is ATP-dependent protease ATPase subunit HslU (442 aa).

Residues Ile18 and 60–65 each bind ATP; that span reads GVGKTE. The tract at residues 136 to 156 is disordered; the sequence is LPKPKNDWDSTDSDANSNTRQ. ATP-binding residues include Asp255, Glu320, and Arg392.

The protein belongs to the ClpX chaperone family. HslU subfamily. As to quaternary structure, a double ring-shaped homohexamer of HslV is capped on each side by a ring-shaped HslU homohexamer. The assembly of the HslU/HslV complex is dependent on binding of ATP.

The protein resides in the cytoplasm. Its function is as follows. ATPase subunit of a proteasome-like degradation complex; this subunit has chaperone activity. The binding of ATP and its subsequent hydrolysis by HslU are essential for unfolding of protein substrates subsequently hydrolyzed by HslV. HslU recognizes the N-terminal part of its protein substrates and unfolds these before they are guided to HslV for hydrolysis. In Shewanella sp. (strain MR-7), this protein is ATP-dependent protease ATPase subunit HslU.